The chain runs to 76 residues: uncharacterized protein (76 aa).

3 helical membrane passes run L2–F22, L28–I48, and E56–I76.

The protein resides in the cell membrane. This is an uncharacterized protein from Bacillus subtilis (strain 168).